The sequence spans 130 residues: Small ribosomal subunit protein uS8 (130 aa).

Belongs to the universal ribosomal protein uS8 family. As to quaternary structure, part of the 30S ribosomal subunit. Contacts proteins S5 and S12.

Functionally, one of the primary rRNA binding proteins, it binds directly to 16S rRNA central domain where it helps coordinate assembly of the platform of the 30S subunit. This chain is Small ribosomal subunit protein uS8, found in Aliivibrio salmonicida (strain LFI1238) (Vibrio salmonicida (strain LFI1238)).